The chain runs to 360 residues: Alpha-2-HS-glycoprotein (360 aa).

Positions 1–15 (LVLLLSLAQLWSCHL) are cleaved as a signal peptide. The region spanning 24–130 (YREHNCDDPE…QFTVLSAKCD (107 aa)) is the Cystatin fetuin-A-type 1 domain. 6 disulfides stabilise this stretch: Cys29-Cys351, Cys86-Cys97, Cys111-Cys129, Cys143-Cys146, Cys205-Cys216, and Cys227-Cys244. The N-linked (GlcNAc...) asparagine glycan is linked to Asn96. Ser131 is modified (phosphoserine). The residue at position 132 (Thr132) is a Phosphothreonine. Ser135 is modified (phosphoserine). Positions 141 to 252 (KLCPDCPLLT…TCTIFPAQPV (112 aa)) constitute a Cystatin fetuin-A-type 2 domain. Asn153 is a glycosylation site (N-linked (GlcNAc...) asparagine). Residues 260–285 (VAGAAAVEPAPAVDPASPVSPPDGQS) are disordered. Thr312 carries the phosphothreonine modification. Ser318, Ser321, and Ser323 each carry phosphoserine.

It belongs to the fetuin family. Phosphorylated by FAM20C in the extracellular medium. As to expression, bone marrow.

Its subcellular location is the secreted. Its function is as follows. A cell adhesion protein that binds immature cells of the granulocyte lineage. The protein is Alpha-2-HS-glycoprotein (AHSG) of Oryctolagus cuniculus (Rabbit).